Consider the following 291-residue polypeptide: MEMO1 family protein PYRAB05390 (291 aa).

This sequence belongs to the MEMO1 family.

This is MEMO1 family protein PYRAB05390 from Pyrococcus abyssi (strain GE5 / Orsay).